Here is a 225-residue protein sequence, read N- to C-terminus: GTP:AMP phosphotransferase, mitochondrial (225 aa).

GTP is bound at residue 24-29; it reads GSGKGT. The segment at 45–74 is NMP; the sequence is SSGDILRQEIKSESTLGREATTYIAQGKLL. AMP is bound by residues Ser46, Arg51, 72–74, 103–106, and Gln110; these read KLL and GFPR. Residues 144–181 are LID; that stretch reads NRYVHVPSGRVYNLQYNPPKVPGLDDITGEPLTKRLDD. Residues Arg145 and 154-155 each bind GTP; that span reads VY. AMP-binding residues include Arg178 and Arg189. Position 218 (Ser218) interacts with GTP.

Belongs to the adenylate kinase family. AK3 subfamily. Monomer.

The protein resides in the mitochondrion matrix. It catalyses the reaction a ribonucleoside 5'-triphosphate + AMP = a ribonucleoside 5'-diphosphate + ADP. Involved in maintaining the homeostasis of cellular nucleotides by catalyzing the interconversion of nucleoside phosphates. Has GTP:AMP phosphotransferase and ITP:AMP phosphotransferase activities. Does not accept ATP as phosphate donor. In Saccharomyces cerevisiae (strain ATCC 204508 / S288c) (Baker's yeast), this protein is GTP:AMP phosphotransferase, mitochondrial.